The sequence spans 405 residues: CMP-sialic acid transporter 5 (405 aa).

Residues 1–43 (MQRNGVVECSVCRSRLVVPSPRSVSRAYDKHRSKISSKFRALN) are Cytoplasmic-facing. Residues 44–64 (VLLVVGDCILVGLQPILVFMS) form a helical membrane-spanning segment. Residues 65 to 74 (KVDGKFQFSP) lie on the Lumenal side of the membrane. A helical transmembrane segment spans residues 75-95 (ISVNFLTEVTKVVFAIVMLII). The Cytoplasmic portion of the chain corresponds to 96 to 121 (QSRKQKVGEKPLLARSTFIQAARNNA). Residues 122–142 (LLAVPALLYAINNYLKFIMQL) traverse the membrane as a helical segment. The Lumenal portion of the chain corresponds to 143–147 (YFNPS). Residues 148–168 (TVKMLSNLKVLVIAVLLKFIM) traverse the membrane as a helical segment. Topologically, residues 169–171 (KRR) are cytoplasmic. A helical transmembrane segment spans residues 172-192 (FSVIQWEALALLLIGISINQL). Over 193 to 200 (RTVPAGNT) the chain is Lumenal. Residues 201–221 (AFGLPVTAIAYIYTLIFVTVP) form a helical membrane-spanning segment. Residues 222 to 244 (SLASVYNEYALKSQYDTSIYLQN) are Cytoplasmic-facing. Residues 245-265 (LFLYGYGAIFNFLGILGTALF) traverse the membrane as a helical segment. Residues 266-281 (QGPESFNILRGHSRAT) are Lumenal-facing. A helical membrane pass occupies residues 282–302 (MFLICNNAAQGILSSFFFKYA). The Cytoplasmic portion of the chain corresponds to 303–322 (DTILKKYSSTVATIFTGLAS). The chain crosses the membrane as a helical span at residues 323–343 (AAFLGHTLTINFLLGISVVFI). Residues 344 to 405 (SMHQFFSPLA…TDERQPLLPT (62 aa)) are Lumenal-facing. The disordered stretch occupies residues 368–405 (DTQNHRSSESSFVNMTAGAAEDASHRIGTDERQPLLPT). Residues 389-405 (DASHRIGTDERQPLLPT) show a composition bias toward basic and acidic residues.

It belongs to the nucleotide-sugar transporter family. CMP-Sialate:CMP antiporter (TC 2.A.7.12) subfamily.

Its subcellular location is the golgi apparatus membrane. In terms of biological role, sugar transporter involved in the transport of CMP-sialic acid from the cytoplasm into the Golgi. May transport important nucleotide sugars such as CMP-Kdo (2-keto-3-deoxy-D-manno-octulosonic acid) in physiological conditions. This chain is CMP-sialic acid transporter 5, found in Oryza sativa subsp. japonica (Rice).